Reading from the N-terminus, the 492-residue chain is Catalase isozyme 1 (492 aa).

Residues histidine 65 and asparagine 138 contribute to the active site. Tyrosine 348 serves as a coordination point for heme.

This sequence belongs to the catalase family. Homotetramer. Heme serves as cofactor.

The protein localises to the peroxisome. It carries out the reaction 2 H2O2 = O2 + 2 H2O. Occurs in almost all aerobically respiring organisms and serves to protect cells from the toxic effects of hydrogen peroxide. The sequence is that of Catalase isozyme 1 (CAT1) from Solanum lycopersicum (Tomato).